The following is a 341-amino-acid chain: Biotin synthase (341 aa).

Residues 53–272 (NHVETASLLS…IAVARIMMPK (220 aa)) form the Radical SAM core domain. Positions 68, 72, and 75 each coordinate [4Fe-4S] cluster. [2Fe-2S] cluster-binding residues include cysteine 112, cysteine 143, cysteine 203, and arginine 276.

Belongs to the radical SAM superfamily. Biotin synthase family. As to quaternary structure, homodimer. [4Fe-4S] cluster is required as a cofactor. It depends on [2Fe-2S] cluster as a cofactor.

It catalyses the reaction (4R,5S)-dethiobiotin + (sulfur carrier)-SH + 2 reduced [2Fe-2S]-[ferredoxin] + 2 S-adenosyl-L-methionine = (sulfur carrier)-H + biotin + 2 5'-deoxyadenosine + 2 L-methionine + 2 oxidized [2Fe-2S]-[ferredoxin]. It participates in cofactor biosynthesis; biotin biosynthesis; biotin from 7,8-diaminononanoate: step 2/2. Catalyzes the conversion of dethiobiotin (DTB) to biotin by the insertion of a sulfur atom into dethiobiotin via a radical-based mechanism. The protein is Biotin synthase of Nitrobacter winogradskyi (strain ATCC 25391 / DSM 10237 / CIP 104748 / NCIMB 11846 / Nb-255).